Here is a 546-residue protein sequence, read N- to C-terminus: CTP synthase (546 aa).

The amidoligase domain stretch occupies residues 1-266; the sequence is MTTRYIFVTG…DDLVVKRFGL (266 aa). CTP is bound at residue S14. Residue S14 coordinates UTP. ATP is bound by residues 15-20 and D72; that span reads SLGKGI. Residues D72 and E140 each contribute to the Mg(2+) site. Residues 147–149, 187–192, and K223 contribute to the CTP site; these read DIE and KTKPTQ. UTP contacts are provided by residues 187–192 and K223; that span reads KTKPTQ. 239–241 is an ATP binding site; it reads KDV. The Glutamine amidotransferase type-1 domain occupies 291–542; sequence VIGMVGKYIE…VAAASAHQKR (252 aa). G352 is a binding site for L-glutamine. C379 acts as the Nucleophile; for glutamine hydrolysis in catalysis. Residues 380–383, E403, and R470 contribute to the L-glutamine site; that span reads LGMQ. Catalysis depends on residues H515 and E517.

It belongs to the CTP synthase family. Homotetramer.

It catalyses the reaction UTP + L-glutamine + ATP + H2O = CTP + L-glutamate + ADP + phosphate + 2 H(+). It carries out the reaction L-glutamine + H2O = L-glutamate + NH4(+). The catalysed reaction is UTP + NH4(+) + ATP = CTP + ADP + phosphate + 2 H(+). It functions in the pathway pyrimidine metabolism; CTP biosynthesis via de novo pathway; CTP from UDP: step 2/2. Allosterically activated by GTP, when glutamine is the substrate; GTP has no effect on the reaction when ammonia is the substrate. The allosteric effector GTP functions by stabilizing the protein conformation that binds the tetrahedral intermediate(s) formed during glutamine hydrolysis. Inhibited by the product CTP, via allosteric rather than competitive inhibition. Catalyzes the ATP-dependent amination of UTP to CTP with either L-glutamine or ammonia as the source of nitrogen. Regulates intracellular CTP levels through interactions with the four ribonucleotide triphosphates. This chain is CTP synthase, found in Shewanella sp. (strain ANA-3).